The primary structure comprises 432 residues: Neuronal pentraxin-1 (432 aa).

The first 22 residues, 1-22, serve as a signal peptide directing secretion; the sequence is MLAGRAARTCALLALCLLGSGA. The interval 88 to 122 is disordered; it reads RCESQSTLDSGPGEARSGGGRKQPGSGKNTMGDLS. Residues asparagine 154 and asparagine 193 are each glycosylated (N-linked (GlcNAc...) asparagine). The region spanning 226 to 428 is the Pentraxin (PTX) domain; sequence DKFQLTFPLR…GATKWTFEAC (203 aa). A disulfide bridge links cysteine 256 with cysteine 316. Residues asparagine 280, glutamate 358, glutamine 359, aspartate 360, and glutamine 370 each contribute to the Ca(2+) site.

In terms of assembly, homooligomer or heterooligomer (probably pentamer) with neuronal pentraxin receptor (NPTXR). Ca(2+) is required as a cofactor. In terms of tissue distribution, expressed in brain and kidney.

It is found in the secreted. The protein localises to the cytoplasmic vesicle. It localises to the secretory vesicle. Its subcellular location is the endoplasmic reticulum. Its function is as follows. May be involved in mediating uptake of synaptic material during synapse remodeling or in mediating the synaptic clustering of AMPA glutamate receptors at a subset of excitatory synapses. The protein is Neuronal pentraxin-1 (Nptx1) of Mus musculus (Mouse).